The sequence spans 520 residues: GMP synthase [glutamine-hydrolyzing] (520 aa).

One can recognise a Glutamine amidotransferase type-1 domain in the interval 9–202 (SVLIVDFGSQ…IHNIAGIKGD (194 aa)). The Nucleophile role is filled by cysteine 86. Catalysis depends on residues histidine 176 and glutamate 178. The region spanning 203–395 (WSMSAYRQKA…LGLPDSFIGR (193 aa)) is the GMPS ATP-PPase domain. 230 to 236 (SGGVDSS) lines the ATP pocket.

As to quaternary structure, homodimer.

The enzyme catalyses XMP + L-glutamine + ATP + H2O = GMP + L-glutamate + AMP + diphosphate + 2 H(+). The protein operates within purine metabolism; GMP biosynthesis; GMP from XMP (L-Gln route): step 1/1. Catalyzes the synthesis of GMP from XMP. The protein is GMP synthase [glutamine-hydrolyzing] of Rhizobium etli (strain CIAT 652).